An 874-amino-acid polypeptide reads, in one-letter code: MKSAEIREAFLRFFEEQGHTRVASSSLIPGNDPTLLFTNAGMNQFKDCFLGQEKRAYTRAVSSQKCVRAGGKHNDLENVGYTARHHTFFEMLGNFSFGDYFKRDAITFAWNFLTSDKWLNLPKEKLWVTVYASDDEAYDIWTQEVGVPAERMVRIGDNKGAPYASDNFWTMGDTGPCGPCTEIFYDHGPDIWGGPPGSPEEDGDRYIEIWNNVFMQFNRTADGVLHPLPAPSVDTGMGLERISAVMQHVHSNYEIDLFQSLLAAAAEAIGCSNDEQPSLKVVADHIRSCGFLIADGVLPSNEGRGYVLRRIIRRACRHGNKLGAKGSFFHKIVAALVTEMGEAFPELKGQQAHIERVLKTEEEQFAKTLEQGLRILEQDLAQLQGKVVPGDVVFKLYDTYGFPMDLTGDIARERELTIDEAGFEREMEAQRERARSASAFGMDYNSLVKVDTATDFLGYDTTEGQGKVIALYKDGQSVEQLTEGEEGVVVLDRTPFYAESGGQVGDSGYLQAGAARFDVRDTTKTGGAFLHHGVIASGALTVGATVDARVDADVQHATSLNHSATHLLHEALRQVLGEHVQQKGSLVDSQRLRFDFSHFEAVKPEQIKALEDIVNREVRRNTEVQTELTDIETAKAKGAMALFGEKYGDTVRVLSMGGDFSVELCGGIHAKRTGDISLFKIISEGGVASGVRRIEAITGAAALAYLNAAEEQVKEAAQLVKGNRDNLIDKLSAVLERNRQLEKQLEQLQAKAASAAGDDLSNAAVEVKGAKVLAARLDGQDGKALLALVDQLKNKLGHAVILLGSEHEGKVVLVAGVTKDLSGQLKAGDLMKQAAAVVGGKGGGRPDMAQGGGVDVASLDQALALAVPFAEQGL.

Zn(2+)-binding residues include His562, His566, Cys665, and His669.

It belongs to the class-II aminoacyl-tRNA synthetase family. Requires Zn(2+) as cofactor.

It localises to the cytoplasm. It catalyses the reaction tRNA(Ala) + L-alanine + ATP = L-alanyl-tRNA(Ala) + AMP + diphosphate. Functionally, catalyzes the attachment of alanine to tRNA(Ala) in a two-step reaction: alanine is first activated by ATP to form Ala-AMP and then transferred to the acceptor end of tRNA(Ala). Also edits incorrectly charged Ser-tRNA(Ala) and Gly-tRNA(Ala) via its editing domain. This chain is Alanine--tRNA ligase, found in Pseudomonas entomophila (strain L48).